The following is a 294-amino-acid chain: C-type lectin domain family 4 member G (294 aa).

Topologically, residues 1 to 30 (MNTGEYNKLGSAIEEVSRGQLGRWECYKQR) are cytoplasmic. A helical; Signal-anchor for type II membrane protein membrane pass occupies residues 31–51 (LFFLVLALLVATVLWALILST). Over 52–294 (LLSSASSKLR…WICEKRSSCY (243 aa)) the chain is Extracellular. Asparagine 73 carries N-linked (GlcNAc...) asparagine glycosylation. Positions 100–151 (AQLQTTLAEFKDIQAKLMEQESILKELQERVTQDLAKASRDRENIRSELFQA) form a coiled coil. 3 N-linked (GlcNAc...) asparagine glycosylation sites follow: asparagine 159, asparagine 246, and asparagine 256. The C-type lectin domain occupies 172-287 (FQGSCYYFSE…CTNERDGWIC (116 aa)). The cysteines at positions 264 and 278 are disulfide-linked.

It is found in the cell membrane. In terms of biological role, binds mannose, N-acetylglucosamine (GlcNAc) and fucose, but not galactose, in a Ca(2+)-dependent manner. This Mus musculus (Mouse) protein is C-type lectin domain family 4 member G (Clec4g).